Here is a 472-residue protein sequence, read N- to C-terminus: Regulator of G-protein signaling 6 (472 aa).

Residues 40–115 enclose the DEP domain; it reads KTGGVPIRTV…DDGTFYRFQA (76 aa). The region spanning 261–330 is the G protein gamma domain; that stretch reads IRKQITFLNA…MSKEPSQQRV (70 aa). The region spanning 336–441 is the RGS domain; the sequence is SFDEILKDQV…LMKSDSYARF (106 aa).

Interacts with GNB5. Interacts with RGS7BP, leading to regulate the subcellular location of the heterodimer formed with GNB5. Interacts with GNAI1.

The protein localises to the cytoplasm. It localises to the cytosol. Its subcellular location is the membrane. The protein resides in the nucleus. It is found in the cell membrane. In terms of biological role, regulates G protein-coupled receptor signaling cascades. Inhibits signal transduction by increasing the GTPase activity of G protein alpha subunits, thereby driving them into their inactive GDP-bound form. The RGS6/GNB5 dimer enhances GNAO1 GTPase activity. The polypeptide is Regulator of G-protein signaling 6 (RGS6) (Homo sapiens (Human)).